The sequence spans 245 residues: Adapter protein MecA (245 aa).

It belongs to the MecA family. As to quaternary structure, homodimer.

Enables the recognition and targeting of unfolded and aggregated proteins to the ClpC protease or to other proteins involved in proteolysis. The chain is Adapter protein MecA from Streptococcus pneumoniae (strain ATCC BAA-255 / R6).